The primary structure comprises 224 residues: Phosphoglycolate phosphatase (224 aa).

The Nucleophile role is filled by D11. The Mg(2+) site is built by D11, D13, and D177.

This sequence belongs to the HAD-like hydrolase superfamily. CbbY/CbbZ/Gph/YieH family. Requires Mg(2+) as cofactor.

It catalyses the reaction 2-phosphoglycolate + H2O = glycolate + phosphate. It participates in organic acid metabolism; glycolate biosynthesis; glycolate from 2-phosphoglycolate: step 1/1. Functionally, specifically catalyzes the dephosphorylation of 2-phosphoglycolate. Is involved in the dissimilation of the intracellular 2-phosphoglycolate formed during the DNA repair of 3'-phosphoglycolate ends, a major class of DNA lesions induced by oxidative stress. This Haemophilus influenzae (strain ATCC 51907 / DSM 11121 / KW20 / Rd) protein is Phosphoglycolate phosphatase.